Here is a 341-residue protein sequence, read N- to C-terminus: tRNA N6-adenosine threonylcarbamoyltransferase (341 aa).

Fe cation contacts are provided by histidine 111 and histidine 115. Substrate is bound by residues 134-138 (LVSGG), aspartate 167, glycine 180, and asparagine 276. Aspartate 304 contacts Fe cation.

The protein belongs to the KAE1 / TsaD family. Fe(2+) is required as a cofactor.

The protein localises to the cytoplasm. The enzyme catalyses L-threonylcarbamoyladenylate + adenosine(37) in tRNA = N(6)-L-threonylcarbamoyladenosine(37) in tRNA + AMP + H(+). Its function is as follows. Required for the formation of a threonylcarbamoyl group on adenosine at position 37 (t(6)A37) in tRNAs that read codons beginning with adenine. Is involved in the transfer of the threonylcarbamoyl moiety of threonylcarbamoyl-AMP (TC-AMP) to the N6 group of A37, together with TsaE and TsaB. TsaD likely plays a direct catalytic role in this reaction. In Pseudomonas entomophila (strain L48), this protein is tRNA N6-adenosine threonylcarbamoyltransferase.